Here is a 29-residue protein sequence, read N- to C-terminus: Cytochrome b6-f complex subunit 8 (29 aa).

A helical transmembrane segment spans residues 3–23; sequence IVSIAWAALMVVFTFSLSLVV.

It belongs to the PetN family. As to quaternary structure, the 4 large subunits of the cytochrome b6-f complex are cytochrome b6, subunit IV (17 kDa polypeptide, PetD), cytochrome f and the Rieske protein, while the 4 small subunits are PetG, PetL, PetM and PetN. The complex functions as a dimer.

The protein localises to the plastid. It localises to the chloroplast thylakoid membrane. In terms of biological role, component of the cytochrome b6-f complex, which mediates electron transfer between photosystem II (PSII) and photosystem I (PSI), cyclic electron flow around PSI, and state transitions. The polypeptide is Cytochrome b6-f complex subunit 8 (Angiopteris evecta (Mule's foot fern)).